The following is a 289-amino-acid chain: ATP synthase gamma chain (289 aa).

The protein belongs to the ATPase gamma chain family. F-type ATPases have 2 components, CF(1) - the catalytic core - and CF(0) - the membrane proton channel. CF(1) has five subunits: alpha(3), beta(3), gamma(1), delta(1), epsilon(1). CF(0) has three main subunits: a, b and c.

It localises to the cell inner membrane. In terms of biological role, produces ATP from ADP in the presence of a proton gradient across the membrane. The gamma chain is believed to be important in regulating ATPase activity and the flow of protons through the CF(0) complex. This Herminiimonas arsenicoxydans protein is ATP synthase gamma chain.